A 301-amino-acid chain; its full sequence is Beta-1,3-galactosyltransferase 5 (301 aa).

Over 1–7 (MAFPKMR) the chain is Cytoplasmic. Residues 8–28 (LMYVCLLVLGALCLYFSMYSL) form a helical; Signal-anchor for type II membrane protein membrane-spanning segment. At 29–301 (NLFKEQSFVY…LLDYWQALEN (273 aa)) the chain is on the lumenal side. N-linked (GlcNAc...) asparagine glycans are attached at residues N130, N174, and N231.

It belongs to the glycosyltransferase 31 family.

Its subcellular location is the golgi apparatus membrane. The catalysed reaction is a globoside Gb4Cer (d18:1(4E)) + UDP-alpha-D-galactose = a globoside GalGb4Cer (d18:1(4E)) + UDP + H(+). The protein operates within protein modification; protein glycosylation. Catalyzes the transfer of Gal to GlcNAc-based acceptors with a preference for the core3 O-linked glycan GlcNAc(beta1,3)GalNAc structure. Can use glycolipid LC3Cer as an efficient acceptor. The polypeptide is Beta-1,3-galactosyltransferase 5 (B3GALT5) (Pan paniscus (Pygmy chimpanzee)).